Here is a 311-residue protein sequence, read N- to C-terminus: Tyrosine recombinase XerD (311 aa).

One can recognise a Core-binding (CB) domain in the interval 3–88; sequence DMSAAYVEAF…ALRQFYKFLY (86 aa). Positions 109–298 constitute a Tyr recombinase domain; it reads TLPKTLSIED…LEERLHDLVQ (190 aa). Active-site residues include Arg-156, Lys-180, His-250, Arg-253, and His-276. Tyr-285 serves as the catalytic O-(3'-phospho-DNA)-tyrosine intermediate.

Belongs to the 'phage' integrase family. XerD subfamily. As to quaternary structure, forms a cyclic heterotetrameric complex composed of two molecules of XerC and two molecules of XerD.

Its subcellular location is the cytoplasm. Functionally, site-specific tyrosine recombinase, which acts by catalyzing the cutting and rejoining of the recombining DNA molecules. The XerC-XerD complex is essential to convert dimers of the bacterial chromosome into monomers to permit their segregation at cell division. It also contributes to the segregational stability of plasmids. The sequence is that of Tyrosine recombinase XerD from Rhizobium meliloti (strain 1021) (Ensifer meliloti).